Consider the following 102-residue polypeptide: NADH-quinone oxidoreductase subunit K (102 aa).

A run of 3 helical transmembrane segments spans residues Leu5–Leu25, Ile31–Phe51, and Val62–Leu82.

It belongs to the complex I subunit 4L family. As to quaternary structure, NDH-1 is composed of 14 different subunits. Subunits NuoA, H, J, K, L, M, N constitute the membrane sector of the complex.

The protein localises to the cell inner membrane. The enzyme catalyses a quinone + NADH + 5 H(+)(in) = a quinol + NAD(+) + 4 H(+)(out). Its function is as follows. NDH-1 shuttles electrons from NADH, via FMN and iron-sulfur (Fe-S) centers, to quinones in the respiratory chain. The immediate electron acceptor for the enzyme in this species is believed to be ubiquinone. Couples the redox reaction to proton translocation (for every two electrons transferred, four hydrogen ions are translocated across the cytoplasmic membrane), and thus conserves the redox energy in a proton gradient. This chain is NADH-quinone oxidoreductase subunit K, found in Bordetella petrii (strain ATCC BAA-461 / DSM 12804 / CCUG 43448).